Reading from the N-terminus, the 415-residue chain is Serine hydroxymethyltransferase (415 aa).

Residues Leu117 and 121–123 each bind (6S)-5,6,7,8-tetrahydrofolate; that span reads GHL. Position 225 is an N6-(pyridoxal phosphate)lysine (Lys225). (6S)-5,6,7,8-tetrahydrofolate-binding positions include Glu241 and 349-351; that span reads SPF.

The protein belongs to the SHMT family. In terms of assembly, homodimer. The cofactor is pyridoxal 5'-phosphate.

The protein resides in the cytoplasm. The catalysed reaction is (6R)-5,10-methylene-5,6,7,8-tetrahydrofolate + glycine + H2O = (6S)-5,6,7,8-tetrahydrofolate + L-serine. It participates in one-carbon metabolism; tetrahydrofolate interconversion. Its pathway is amino-acid biosynthesis; glycine biosynthesis; glycine from L-serine: step 1/1. Catalyzes the reversible interconversion of serine and glycine with tetrahydrofolate (THF) serving as the one-carbon carrier. This reaction serves as the major source of one-carbon groups required for the biosynthesis of purines, thymidylate, methionine, and other important biomolecules. Also exhibits THF-independent aldolase activity toward beta-hydroxyamino acids, producing glycine and aldehydes, via a retro-aldol mechanism. The chain is Serine hydroxymethyltransferase from Campylobacter hominis (strain ATCC BAA-381 / DSM 21671 / CCUG 45161 / LMG 19568 / NCTC 13146 / CH001A).